The sequence spans 556 residues: Guard cell S-type anion channel SLAC1 (556 aa).

Positions 1 to 103 (MERKQSNAHS…GIINGGDGRK (103 aa)) are disordered. At 1-189 (MERKQSNAHS…EQWPFLLRFP (189 aa)) the chain is on the cytoplasmic side. A coiled-coil region spans residues 10–36 (STFADINEVEDEAEQELQQQENNNNKR). Residues 25–34 (ELQQQENNNN) show a composition bias toward low complexity. Ser59 is modified (phosphoserine; by SRK2E). Residues 69 to 79 (RESRERDDKKS) are compositionally biased toward basic and acidic residues. Phosphoserine; by SRK2E occurs at positions 86, 113, and 120. A compositionally biased stretch (gly residues) spans 86-99 (SFGGFESGGIINGG). Phosphoserine is present on Ser146. Residues 190–210 (IGCFGICLGLSSQAVLWLALA) form a helical membrane-spanning segment. Residues 211–216 (KSPATN) lie on the Extracellular side of the membrane. The helical transmembrane segment at 217 to 237 (FLHITPLINLVVWLFSLVVLV) threads the bilayer. The Cytoplasmic segment spans residues 238–265 (SVSFTYILKCIFYFEAVKREYFHPVRVN). The chain crosses the membrane as a helical span at residues 266–286 (FFFAPWVVCMFLAISVPPMFS). The Extracellular portion of the chain corresponds to 287–295 (PNRKYLHPA). A helical transmembrane segment spans residues 296 to 316 (IWCVFMGPYFFLELKIYGQWL). The Cytoplasmic segment spans residues 317-325 (SGGKRRLCK). A helical membrane pass occupies residues 326–346 (VANPSSHLSVVGNFVGAILAS). Over 347 to 352 (KVGWDE) the chain is Extracellular. A helical transmembrane segment spans residues 353 to 373 (VAKFLWAVGFAHYLVVFVTLY). The Cytoplasmic portion of the chain corresponds to 374-388 (QRLPTSEALPKELHP). Residues 389–409 (VYSMFIAAPSAASIAWNTIYG) traverse the membrane as a helical segment. At 410-418 (QFDGCSRTC) the chain is on the extracellular side. The helical transmembrane segment at 419–439 (FFIALFLYISLVARINFFTGF) threads the bilayer. A topological domain (cytoplasmic) is located at residue Lys440. Residues 441 to 463 (FSVAWWSYTFPMTTASVATIKYA) form a helical membrane-spanning segment. Residues 464–479 (EAVPGYPSRALALTLS) lie on the Extracellular side of the membrane. The chain crosses the membrane as a helical span at residues 480–500 (FISTAMVCVLFVSTLLHAFVW). At 501–556 (QTLFPNDLAIAITKRKLTREKKPFKRAYDLKRWTKQALAKKISAEKDFEAEEESHH) the chain is on the cytoplasmic side.

It belongs to the SLAC1 S-type anion channel family. Homotrimer. Interacts with SRK2E, CPK6, CPK21, CPK23 and PP2CA. The channel is inactivated upon PP2CA and ABI1 binding. Interacts with KAT1, KAT2, KAT3/KC1 and AKT2. Interacts with GHR1. Post-translationally, phosphorylation by SRK2E, especially on Ser-120, activates the channel. Also phosphorylated and activated by CPK21 and CPK23. Abscisic acid (ABA) promotes phosphorylation. This phosphorylation is inhibited by ABI1. Phosphorylated and activated by GHR1; this phosphorylation is repressed by ABI2 but not ABI1. Phosphorylated by HT1 on N-terminus but not C-terminus. Preferentially expressed in guard cells. Also detected in the vascular strands close to the leaf margins.

It localises to the cell membrane. Its activity is regulated as follows. Activated by GHR1-mediated phosphorylation which is negatively regulated by ABI2 but not ABI1. Activation by SRK2E/OST1 and GHR1 is repressed by HT1. Slow, weak voltage-dependent S-type anion efflux channel involved in maintenance of anion homeostasis. Cl(-) efflux through SLAC1 causes membrane depolarization, which activates outward-rectifying K1 channels, leading to KCl and water efflux to reduce turgor further and cause stomatal closure, that reduces water loss and promotes leaf turgor. Essential for stomatal closure in response to CO(2), abscisic acid (ABA), ozone O(3), light/dark transitions, humidity change, calcium ions, hydrogen peroxide H(2)O(2), reactive oxygen species (ROS), and nitric oxide. Binds to the highly selective inward-rectifying potassium channels KAT1 and AKT2, and inhibits their activities. Functions as an essential negative regulator of inward potassium channels in guard cells. Essential for the efficient stomatal closure and opening in guard cells. Involved in the local and/or systemic stomatal responses (e.g. stomatal closure) to light stress. This Arabidopsis thaliana (Mouse-ear cress) protein is Guard cell S-type anion channel SLAC1.